The following is a 142-amino-acid chain: MVLSPADKTNVKTTWDKLGGHAGEYGGEALERTFTAFPTTKTYFPHFDLSHGSAQVKAHGKKVADALTTAVAHMDDLPGALSALSDLHAYKLRVDPVNFKLLSHCLLVTLACHHPAEFTPAVHASLDKFFSAVSTVLTSKYR.

One can recognise a Globin domain in the interval V2–R142. An O2-binding site is contributed by H59. Position 88 (H88) interacts with heme b.

The protein belongs to the globin family. Heterotetramer of two alpha chains and two beta chains. Red blood cells.

Its function is as follows. Involved in oxygen transport from the lung to the various peripheral tissues. The sequence is that of Hemoglobin subunit alpha-2 from Arctocephalus galapagoensis (Galapagoes fur seal).